The sequence spans 434 residues: FAD-dependent monooxygenase cfoG (434 aa).

The first 22 residues, 1 to 22 (MKSSPGLHIIIVGAGITGLATA), serve as a signal peptide directing secretion. Residue Glu36 coordinates FAD. Active-site residues include Arg193 and Tyr233. Positions 314 and 327 each coordinate FAD.

The protein belongs to the paxM FAD-dependent monooxygenase family. Monomer. It depends on FAD as a cofactor.

It functions in the pathway secondary metabolite biosynthesis; flavonoid biosynthesis. In terms of biological role, monooxygenase; part of the gene cluster that mediates the biosynthesis of chlorflavonin, a fungal flavonoid with acetolactate synthase inhibitory activity. Within the pathway, cfoG is responsible for the hydroxylation of the flavonoid skeleton at position C8. The pathway begins with the PKS-NRPS hybrid synthetase cfoA that uses benzoic acid or p-hydroxybenzoic acid as a starter unit with four rounds of chain elongation using malonyl-CoA to form the chalcone skeleton. Then, a new type of chalcone isomerase, cfoK, catalyzes the conversion of the chalcone into a flavanone by a histidine-mediated oxa-Michael addition mechanism. The desaturation of flavanone to flavone is catalyzed by a new type of flavone synthase, the flavin mononucleotide (FMN)-dependent oxidoreductase cfoJ. Monooxygenases cfoF, cfoG, and P450 cfoH are responsible for the hydroxylation of the flavonoid skeleton at sites C3, C8, and C2', respectively. Like cfoF, the dehydratase cfoI plays also a role in the hydroxylation of position C3. Methyltransferases cfoB, cfoC, and cfoD then catalyze the methylation of C7-OH, C8-OH, and C3-OH, respectively. Finally, the monooxygenase cfoE is responsible for the chlorination of flavonoid at position C3'. The protein is FAD-dependent monooxygenase cfoG of Aspergillus candidus.